Reading from the N-terminus, the 56-residue chain is U4-myrmicitoxin-Tb1a (56 aa).

Residues methionine 1–alanine 26 form the signal peptide. Residues lysine 27 to alanine 40 constitute a propeptide that is removed on maturation. A Glycine amide modification is found at glycine 53.

In terms of processing, contains 1 disulfide bond. Expressed by the venom gland.

The protein localises to the secreted. In terms of biological role, venom protein with unknown function. Does not induce paralysis when a high dose is administered by intrathoracic injection into the blowfly Lucilia caesar. The sequence is that of U4-myrmicitoxin-Tb1a from Tetramorium bicarinatum (Tramp ant).